The following is a 205-amino-acid chain: Glycerol-3-phosphate acyltransferase (205 aa).

At 1–3 (MSA) the chain is on the periplasmic side. A helical membrane pass occupies residues 4–24 (IAPGMILFAYLCGSISSAILV). Over 25–52 (CRIAGLPDPRESGSGNPGATNVLRIGGK) the chain is Cytoplasmic. A helical transmembrane segment spans residues 53–73 (GAAVAVLIFDILKGMLPVWGA). Residues 74 to 80 (YALGVTP) are Periplasmic-facing. Residues 81–101 (FWLGLIAIAACLGHIWPVFFG) form a helical membrane-spanning segment. The Cytoplasmic segment spans residues 102–111 (FKGGKGVATA). A helical membrane pass occupies residues 112–132 (FGAIAPIGWDLTGVMAGTWLL). At 133-137 (TVLLS) the chain is on the periplasmic side. The chain crosses the membrane as a helical span at residues 138-158 (GYSSLGAIVSALIAPFYVWWF). The Cytoplasmic segment spans residues 159 to 205 (KPQFTFPVSMLSCLILLRHHDNIQRLWRRQETKIWTKLKKKRQKDSE).

The protein belongs to the PlsY family. In terms of assembly, probably interacts with PlsX.

Its subcellular location is the cell inner membrane. The enzyme catalyses sn-glycerol 3-phosphate + an acyl-CoA = a 1-acyl-sn-glycero-3-phosphate + CoA. It carries out the reaction a fatty acyl-[ACP] + sn-glycerol 3-phosphate = a 1-acyl-sn-glycero-3-phosphate + holo-[ACP]. It functions in the pathway lipid metabolism; phospholipid metabolism. Its function is as follows. Catalyzes the transfer of an acyl group from acyl-ACP to glycerol-3-phosphate (G3P) to form lysophosphatidic acid (LPA). This enzyme can also utilize acyl-CoA as fatty acyl donor, but not acyl-PO(4). In Salmonella schwarzengrund (strain CVM19633), this protein is Glycerol-3-phosphate acyltransferase.